We begin with the raw amino-acid sequence, 301 residues long: Homoserine O-acetyltransferase (301 aa).

Residue cysteine 142 is the Acyl-thioester intermediate of the active site. Substrate contacts are provided by lysine 163 and serine 192. The active-site Proton acceptor is histidine 235. Residue glutamate 237 is part of the active site. Arginine 249 contacts substrate.

The protein belongs to the MetA family.

The protein localises to the cytoplasm. It carries out the reaction L-homoserine + acetyl-CoA = O-acetyl-L-homoserine + CoA. It participates in amino-acid biosynthesis; L-methionine biosynthesis via de novo pathway; O-acetyl-L-homoserine from L-homoserine: step 1/1. Transfers an acetyl group from acetyl-CoA to L-homoserine, forming acetyl-L-homoserine. The polypeptide is Homoserine O-acetyltransferase (Novosphingobium aromaticivorans (strain ATCC 700278 / DSM 12444 / CCUG 56034 / CIP 105152 / NBRC 16084 / F199)).